Consider the following 131-residue polypeptide: Global transcriptional regulator Spx (131 aa).

The cysteines at positions 10 and 13 are disulfide-linked.

The protein belongs to the ArsC family. Spx subfamily. In terms of assembly, interacts with the C-terminal domain of the alpha subunit of the RNAP.

It is found in the cytoplasm. Its function is as follows. Global transcriptional regulator that plays a key role in stress response and exerts either positive or negative regulation of genes. Acts by interacting with the C-terminal domain of the alpha subunit of the RNA polymerase (RNAP). This interaction can enhance binding of RNAP to the promoter region of target genes and stimulate their transcription, or block interaction of RNAP with activator. This is Global transcriptional regulator Spx from Listeria innocua serovar 6a (strain ATCC BAA-680 / CLIP 11262).